Here is a 433-residue protein sequence, read N- to C-terminus: PHO85 cyclin-10 (433 aa).

Over residues 1-10 (MDMTKNHTTD) the composition is skewed to basic and acidic residues. 2 disordered regions span residues 1 to 20 (MDMT…GDIR) and 51 to 81 (LTSE…TTDS). The span at 51–63 (LTSEWDQSRSNTP) shows a compositional bias: polar residues.

This sequence belongs to the cyclin family. PHO80 subfamily. As to quaternary structure, forms a cyclin-CDK complex with PHO85. Interacts with GSY2, independent of the presence of PHO85.

It localises to the cytoplasm. In terms of biological role, cyclin partner of the cyclin-dependent kinase (CDK) PHO85. Together with cyclin PCL8, negatively controls glycogen accumulation under favorable growth conditions. The PCL10-PHO85 cyclin-CDK holoenzyme has glycogen synthase kinase activity and phosphorylates and negatively regulates glycogen synthase GSY2. Also has minor GLC8 kinase activity. The chain is PHO85 cyclin-10 (PCL10) from Saccharomyces cerevisiae (strain ATCC 204508 / S288c) (Baker's yeast).